Here is a 165-residue protein sequence, read N- to C-terminus: Interferon gamma (165 aa).

The N-terminal stretch at Met1–Cys23 is a signal peptide. Residue Gln24 is modified to Pyrrolidone carboxylic acid. 2 N-linked (GlcNAc...) asparagine glycosylation sites follow: Asn48 and Asn120.

Belongs to the type II (or gamma) interferon family. Homodimer. Interacts with IFNGR1 (via extracellular domain); this interaction promotes IFNGR1 dimerization.

It is found in the secreted. Its function is as follows. Type II interferon produced by immune cells such as T-cells and NK cells that plays crucial roles in antimicrobial, antiviral, and antitumor responses by activating effector immune cells and enhancing antigen presentation. Primarily signals through the JAK-STAT pathway after interaction with its receptor IFNGR1 to affect gene regulation. Upon IFNG binding, IFNGR1 intracellular domain opens out to allow association of downstream signaling components JAK2, JAK1 and STAT1, leading to STAT1 activation, nuclear translocation and transcription of IFNG-regulated genes. Many of the induced genes are transcription factors such as IRF1 that are able to further drive regulation of a next wave of transcription. Plays a role in class I antigen presentation pathway by inducing a replacement of catalytic proteasome subunits with immunoproteasome subunits. In turn, increases the quantity, quality, and repertoire of peptides for class I MHC loading. Increases the efficiency of peptide generation also by inducing the expression of activator PA28 that associates with the proteasome and alters its proteolytic cleavage preference. Up-regulates as well MHC II complexes on the cell surface by promoting expression of several key molecules such as cathepsins B/CTSB, H/CTSH, and L/CTSL. Participates in the regulation of hematopoietic stem cells during development and under homeostatic conditions by affecting their development, quiescence, and differentiation. In Papio anubis (Olive baboon), this protein is Interferon gamma (IFNG).